An 878-amino-acid chain; its full sequence is Phosphoenolpyruvate carboxylase (878 aa).

Catalysis depends on residues His-140 and Lys-545.

This sequence belongs to the PEPCase type 1 family. Mg(2+) is required as a cofactor.

It carries out the reaction oxaloacetate + phosphate = phosphoenolpyruvate + hydrogencarbonate. Functionally, forms oxaloacetate, a four-carbon dicarboxylic acid source for the tricarboxylic acid cycle. The protein is Phosphoenolpyruvate carboxylase of Pseudomonas paraeruginosa (strain DSM 24068 / PA7) (Pseudomonas aeruginosa (strain PA7)).